Here is a 914-residue protein sequence, read N- to C-terminus: Translation initiation factor IF-2 (914 aa).

A disordered region spans residues 58–160; sequence KTEKKQTAKK…EAEPKIEVMP (103 aa). Basic and acidic residues predominate over residues 70–91; the sequence is KKDTVKKDTVKKTAVKKDDSKA. A compositionally biased stretch (basic residues) spans 92–103; that stretch reads AKKTKPIAKKSA. Residues 104 to 160 are compositionally biased toward basic and acidic residues; the sequence is PKTEKKVEKKVESKISKPDNEILEAKPEISKPEIKAEPKKEEIEQKQEAEPKIEVMP. In terms of domain architecture, tr-type G spans 413–582; sequence ERVPVITIMG…LLQADLLELK (170 aa). The segment at 422 to 429 is G1; that stretch reads GHVDHGKT. Position 422–429 (422–429) interacts with GTP; it reads GHVDHGKT. A G2 region spans residues 447 to 451; it reads GITQH. The segment at 468 to 471 is G3; the sequence is DTPG. GTP-binding positions include 468–472 and 522–525; these read DTPGH and NKMD. The segment at 522-525 is G4; it reads NKMD. Residues 558-560 are G5; it reads SAK.

It belongs to the TRAFAC class translation factor GTPase superfamily. Classic translation factor GTPase family. IF-2 subfamily.

It localises to the cytoplasm. Its function is as follows. One of the essential components for the initiation of protein synthesis. Protects formylmethionyl-tRNA from spontaneous hydrolysis and promotes its binding to the 30S ribosomal subunits. Also involved in the hydrolysis of GTP during the formation of the 70S ribosomal complex. This Campylobacter hominis (strain ATCC BAA-381 / DSM 21671 / CCUG 45161 / LMG 19568 / NCTC 13146 / CH001A) protein is Translation initiation factor IF-2.